The primary structure comprises 297 residues: uncharacterized protein (297 aa).

Helical transmembrane passes span 114–136 (YNRWLVVFMIGLSCAAFAHLSSG), 150–170 (LLYDMLFAAIPAVGFALVFNV), 197–217 (MPIVFATFFATCVIGFLGVHL), 227–247 (AFTVAAIIPMIPGVHAYKAMI), and 269–289 (FINTSFILGAIVFGLALPGLL).

It belongs to the ThrE exporter (TC 2.A.79) family.

It is found in the cell inner membrane. This is an uncharacterized protein from Haemophilus influenzae (strain ATCC 51907 / DSM 11121 / KW20 / Rd).